The primary structure comprises 52 residues: Proteinase inhibitor PSI-1.2 (52 aa).

Intrachain disulfides connect cysteine 3/cysteine 32, cysteine 7/cysteine 28, cysteine 16/cysteine 38, and cysteine 31/cysteine 49.

In terms of biological role, potent inhibitor of trypsin and a weaker inhibitor of chymotrypsin. It does not inhibit elastase and subtilisin DY. The protein is Proteinase inhibitor PSI-1.2 of Capsicum annuum (Capsicum pepper).